The chain runs to 259 residues: Acyl-[acyl-carrier-protein]--UDP-N-acetylglucosamine O-acyltransferase (259 aa).

This sequence belongs to the transferase hexapeptide repeat family. LpxA subfamily. Homotrimer.

The protein localises to the cytoplasm. The enzyme catalyses a (3R)-hydroxyacyl-[ACP] + UDP-N-acetyl-alpha-D-glucosamine = a UDP-3-O-[(3R)-3-hydroxyacyl]-N-acetyl-alpha-D-glucosamine + holo-[ACP]. The protein operates within glycolipid biosynthesis; lipid IV(A) biosynthesis; lipid IV(A) from (3R)-3-hydroxytetradecanoyl-[acyl-carrier-protein] and UDP-N-acetyl-alpha-D-glucosamine: step 1/6. Its function is as follows. Involved in the biosynthesis of lipid A, a phosphorylated glycolipid that anchors the lipopolysaccharide to the outer membrane of the cell. In Nautilia profundicola (strain ATCC BAA-1463 / DSM 18972 / AmH), this protein is Acyl-[acyl-carrier-protein]--UDP-N-acetylglucosamine O-acyltransferase.